Reading from the N-terminus, the 501-residue chain is Aldehyde dehydrogenase 1A1 (501 aa).

Residue S2 is modified to N-acetylserine. N6-acetyllysine occurs at positions 91 and 128. NAD(+)-binding positions include 167-170 (LPWN), 193-196 (KPAE), 226-227 (GP), and 246-247 (GS). K252 is subject to N6-acetyllysine. E269 serves as the catalytic Proton acceptor. 269–271 (ELG) serves as a coordination point for NAD(+). The Nucleophile role is filled by C303. The interval 336–501 (LTPGVSQGPQ…VTVKISQKNS (166 aa)) is mediates interaction with PRMT3. T337 is modified (phosphothreonine). 349–353 (EQYDK) contacts NAD(+). K353 and K367 each carry N6-acetyllysine. 400 to 402 (EIF) is an NAD(+) binding site. K410 is subject to N6-acetyllysine. S413 carries the phosphoserine modification. 3 positions are modified to N6-acetyllysine: K419, K435, and K495.

It belongs to the aldehyde dehydrogenase family. In terms of assembly, homotetramer. Interacts with PRMT3; the interaction is direct, inhibits ALDH1A1 aldehyde dehydrogenase activity and is independent of the methyltransferase activity of PRMT3. In terms of processing, the N-terminus is blocked most probably by acetylation.

The protein resides in the cytoplasm. It is found in the cytosol. The protein localises to the cell projection. Its subcellular location is the axon. It catalyses the reaction an aldehyde + NAD(+) + H2O = a carboxylate + NADH + 2 H(+). It carries out the reaction all-trans-retinal + NAD(+) + H2O = all-trans-retinoate + NADH + 2 H(+). The enzyme catalyses 9-cis-retinal + NAD(+) + H2O = 9-cis-retinoate + NADH + 2 H(+). The catalysed reaction is 11-cis-retinal + NAD(+) + H2O = 11-cis-retinoate + NADH + 2 H(+). It catalyses the reaction 13-cis-retinal + NAD(+) + H2O = 13-cis-retinoate + NADH + 2 H(+). It carries out the reaction 3-deoxyglucosone + NAD(+) + H2O = 2-dehydro-3-deoxy-D-gluconate + NADH + 2 H(+). The enzyme catalyses (E)-4-hydroxynon-2-enal + NAD(+) + H2O = (E)-4-hydroxynon-2-enoate + NADH + 2 H(+). The catalysed reaction is malonaldehyde + NAD(+) + H2O = 3-oxopropanoate + NADH + 2 H(+). It catalyses the reaction hexanal + NAD(+) + H2O = hexanoate + NADH + 2 H(+). It carries out the reaction propanal + NAD(+) + H2O = propanoate + NADH + 2 H(+). The enzyme catalyses acetaldehyde + NAD(+) + H2O = acetate + NADH + 2 H(+). The catalysed reaction is benzaldehyde + NAD(+) + H2O = benzoate + NADH + 2 H(+). It catalyses the reaction 4-aminobutanal + NAD(+) + H2O = 4-aminobutanoate + NADH + 2 H(+). It participates in cofactor metabolism; retinol metabolism. Functionally, cytosolic dehydrogenase that catalyzes the irreversible oxidation of a wide range of aldehydes to their corresponding carboxylic acid. Functions downstream of retinol dehydrogenases and catalyzes the oxidation of retinaldehyde into retinoic acid, the second step in the oxidation of retinol/vitamin A into retinoic acid. This pathway is crucial to control the levels of retinol and retinoic acid, two important molecules which excess can be teratogenic and cytotoxic. Also oxidizes aldehydes resulting from lipid peroxidation like (E)-4-hydroxynon-2-enal/HNE, malonaldehyde and hexanal that form protein adducts and are highly cytotoxic. By participating for instance to the clearance of (E)-4-hydroxynon-2-enal/HNE in the lens epithelium prevents the formation of HNE-protein adducts and lens opacification. Also functions downstream of fructosamine-3-kinase in the fructosamine degradation pathway by catalyzing the oxidation of 3-deoxyglucosone, the carbohydrate product of fructosamine 3-phosphate decomposition, which is itself a potent glycating agent that may react with lysine and arginine side-chains of proteins. Also has an aminobutyraldehyde dehydrogenase activity and is probably part of an alternative pathway for the biosynthesis of GABA/4-aminobutanoate in midbrain, thereby playing a role in GABAergic synaptic transmission. The polypeptide is Aldehyde dehydrogenase 1A1 (Equus caballus (Horse)).